Reading from the N-terminus, the 302-residue chain is Pyridoxal 5'-phosphate synthase subunit PdxS (302 aa).

Position 32 (Asp32) interacts with D-ribose 5-phosphate. The active-site Schiff-base intermediate with D-ribose 5-phosphate is Lys89. Gly161 provides a ligand contact to D-ribose 5-phosphate. Arg173 contacts D-glyceraldehyde 3-phosphate. D-ribose 5-phosphate is bound by residues Gly222 and 243–244 (GS). Residues 278 to 302 (GIGKGMKGQSNEDLPDEEKLQGRGV) are disordered.

This sequence belongs to the PdxS/SNZ family. As to quaternary structure, in the presence of PdxT, forms a dodecamer of heterodimers.

It catalyses the reaction aldehydo-D-ribose 5-phosphate + D-glyceraldehyde 3-phosphate + L-glutamine = pyridoxal 5'-phosphate + L-glutamate + phosphate + 3 H2O + H(+). It functions in the pathway cofactor biosynthesis; pyridoxal 5'-phosphate biosynthesis. In terms of biological role, catalyzes the formation of pyridoxal 5'-phosphate from ribose 5-phosphate (RBP), glyceraldehyde 3-phosphate (G3P) and ammonia. The ammonia is provided by the PdxT subunit. Can also use ribulose 5-phosphate and dihydroxyacetone phosphate as substrates, resulting from enzyme-catalyzed isomerization of RBP and G3P, respectively. This Halorubrum lacusprofundi (strain ATCC 49239 / DSM 5036 / JCM 8891 / ACAM 34) protein is Pyridoxal 5'-phosphate synthase subunit PdxS.